A 102-amino-acid chain; its full sequence is Small ribosomal subunit protein uS10c (102 aa).

Belongs to the universal ribosomal protein uS10 family. In terms of assembly, part of the 30S ribosomal subunit.

Its subcellular location is the plastid. It is found in the chloroplast. In terms of biological role, involved in the binding of tRNA to the ribosomes. This is Small ribosomal subunit protein uS10c from Guillardia theta (Cryptophyte).